A 148-amino-acid polypeptide reads, in one-letter code: Caltractin (148 aa).

EF-hand domains lie at 4-39, 40-75, 77-112, and 113-148; these read EQKQ…LGFE, PKKE…KMGE, DSRE…LGEN, and LTDE…TSLF. Positions 17, 19, 21, 23, 28, 53, 55, 57, 59, and 64 each coordinate Ca(2+). Residues Asp126, Asp128, Asp130, Glu132, and Glu137 each contribute to the Ca(2+) site.

It belongs to the centrin family. As to expression, ubiquitous.

In terms of biological role, this calcium-binding protein is found in the basal body complexes (the functional homolog of the centrosome in animal cell). In mitotic cells it is specifically associated with the poles of the mitotic spindles at the sites of the duplicated basal body complexes. The protein is Caltractin of Spermatozopsis similis (Green alga).